The following is a 553-amino-acid chain: HTH-type transcriptional regulator SgrR (553 aa).

Residues 1-117 enclose the HTH marR-type domain; sequence MPSSRLQQQF…LSQIERRFRQ (117 aa). Positions 26–49 form a DNA-binding region, H-T-H motif; sequence LQELANVLHCSKRHIRSLLNNMQK. Residues 163 to 494 are solute-binding; it reads EPEADLAHHW…NDLSKEVSQW (332 aa).

Activates the small RNA gene sgrS under glucose-phosphate stress conditions as well as yfdZ. Represses its own transcription under both stress and non-stress conditions. Might act as a sensor of the intracellular accumulation of phosphoglucose by binding these molecules in its C-terminal solute-binding domain. The sequence is that of HTH-type transcriptional regulator SgrR from Photorhabdus laumondii subsp. laumondii (strain DSM 15139 / CIP 105565 / TT01) (Photorhabdus luminescens subsp. laumondii).